The sequence spans 557 residues: E3 ubiquitin-protein ligase rnf168 (557 aa).

The RING-type zinc-finger motif lies at 16–55 (CPICQEILLEPVTLPCKHTLCNPCFQMTVEKASLCCPFCR). The short motif at 112–130 (LCQPGEIRQEYEAEVSKIE) is the LR motif 1 element. The UMI motif signature appears at 145-153 (EDYIQKLLA). 2 consecutive short sequence motifs (MIU motif) follow at residues 170–193 (MEEQ…VSNA) and 422–445 (RRRQ…KELK). An LR motif 2 motif is present at residues 449-460 (RGKGSPDEYELR). The tract at residues 482–543 (PLRKEIPVQD…GINVLKPINK (62 aa)) is disordered. Residues 490 to 500 (QDNSRNTQSEY) are compositionally biased toward polar residues. Basic residues predominate over residues 508–521 (PSRKNSVRSARVRQ).

The protein belongs to the RNF168 family. As to quaternary structure, monomer.

The protein resides in the nucleus. The catalysed reaction is S-ubiquitinyl-[E2 ubiquitin-conjugating enzyme]-L-cysteine + [acceptor protein]-L-lysine = [E2 ubiquitin-conjugating enzyme]-L-cysteine + N(6)-ubiquitinyl-[acceptor protein]-L-lysine.. It functions in the pathway protein modification; protein ubiquitination. In terms of biological role, E3 ubiquitin-protein ligase required for accumulation of repair proteins to sites of DNA damage. Acts with ube2n/ubc13 to amplify the rnf8-dependent histone ubiquitination. Recruited to sites of DNA damage at double-strand breaks (DSBs) by binding to ubiquitinated histone H2A and ubiquitinates histone H2A and H2AX, leading to amplify the rnf8-dependent H2A ubiquitination and promoting the formation of 'Lys-63'-linked ubiquitin conjugates. This leads to concentrate ubiquitinated histones H2A and H2AX at DNA lesions to the threshold required for recruitment of tp53bp1 and brca1. Catalyzes monoubiquitination of 'Lys-13' and 'Lys-15' of nucleosomal histone H2A (H2AK13Ub and H2AK15Ub, respectively). In Xenopus laevis (African clawed frog), this protein is E3 ubiquitin-protein ligase rnf168.